The primary structure comprises 422 residues: Ameloblastin (422 aa).

The signal sequence occupies residues methionine 1–alanine 26. Proline 42 bears the Hydroxyproline mark. The residue at position 48 (serine 48) is a Phosphoserine. The O-linked (GalNAc...) serine glycan is linked to serine 117. Positions glycine 271–leucine 321 are disordered.

Belongs to the ameloblastin family. As to expression, ameloblast-specific.

It is found in the secreted. It localises to the extracellular space. The protein localises to the extracellular matrix. Involved in the mineralization and structural organization of enamel. The polypeptide is Ameloblastin (Ambn) (Rattus norvegicus (Rat)).